The following is a 410-amino-acid chain: Na(+)-translocating NADH-quinone reductase subunit B (410 aa).

The next 3 membrane-spanning stretches (helical) occupy residues 56-76 (MMIL…YNVG), 119-139 (LFGA…GGFW), and 159-179 (SILF…ALGI). T232 is modified (FMN phosphoryl threonine). Transmembrane regions (helical) follow at residues 266 to 286 (GSIG…IVFA), 293 to 313 (IIAG…FIGS), 318 to 338 (MFAM…GMLF), 347 to 367 (SFTN…CVLI), and 377 to 397 (GMML…YFVA).

The protein belongs to the NqrB/RnfD family. In terms of assembly, composed of six subunits; NqrA, NqrB, NqrC, NqrD, NqrE and NqrF. It depends on FMN as a cofactor.

It is found in the cell inner membrane. It catalyses the reaction a ubiquinone + n Na(+)(in) + NADH + H(+) = a ubiquinol + n Na(+)(out) + NAD(+). In terms of biological role, NQR complex catalyzes the reduction of ubiquinone-1 to ubiquinol by two successive reactions, coupled with the transport of Na(+) ions from the cytoplasm to the periplasm. NqrA to NqrE are probably involved in the second step, the conversion of ubisemiquinone to ubiquinol. The protein is Na(+)-translocating NADH-quinone reductase subunit B of Neisseria meningitidis serogroup B (strain ATCC BAA-335 / MC58).